A 329-amino-acid chain; its full sequence is Protein mlo2 (329 aa).

The UBR-type zinc finger occupies 33–104 (DTCTYSMGYL…HSIPCNLRKS (72 aa)). A PHD-type zinc finger spans residues 120-179 (GRFCICDTVYNPETEEGTMFQCILCEDWFHEKCLQKTNKGIAIPDAETFEWLVCSECSEK).

It belongs to the UBR7 family.

Not known, interfere with mitotic chromosome segregation when overexpressed. The protein is Protein mlo2 (mlo2) of Schizosaccharomyces pombe (strain 972 / ATCC 24843) (Fission yeast).